We begin with the raw amino-acid sequence, 197 residues long: Recombination protein RecR (197 aa).

The C4-type zinc-finger motif lies at Cys-57 to Cys-72. One can recognise a Toprim domain in the interval Ser-80 to Pro-174.

It belongs to the RecR family.

Its function is as follows. May play a role in DNA repair. It seems to be involved in an RecBC-independent recombinational process of DNA repair. It may act with RecF and RecO. The polypeptide is Recombination protein RecR (Syntrophomonas wolfei subsp. wolfei (strain DSM 2245B / Goettingen)).